The chain runs to 459 residues: Bifunctional protein GlmU (459 aa).

A pyrophosphorylase region spans residues 1–229 (MTNYAIILAA…FDESLGVNDR (229 aa)). Residues 8-11 (LAAG), Lys22, Gln72, and 77-78 (GT) each bind UDP-N-acetyl-alpha-D-glucosamine. Residue Asp102 participates in Mg(2+) binding. The UDP-N-acetyl-alpha-D-glucosamine site is built by Gly139, Glu154, Asn169, and Asn227. Asn227 lines the Mg(2+) pocket. A linker region spans residues 230–250 (VALAKAEKVMRRRINHAHMVN). Residues 251-459 (GVTLTNPAST…KKKPHHPNNK (209 aa)) are N-acetyltransferase. Residues Arg332 and Lys350 each contribute to the UDP-N-acetyl-alpha-D-glucosamine site. His362 (proton acceptor) is an active-site residue. 2 residues coordinate UDP-N-acetyl-alpha-D-glucosamine: Tyr365 and Asn376. Residues Ala379, 385 to 386 (NY), Ser404, Ala422, and Arg439 contribute to the acetyl-CoA site.

It in the N-terminal section; belongs to the N-acetylglucosamine-1-phosphate uridyltransferase family. The protein in the C-terminal section; belongs to the transferase hexapeptide repeat family. As to quaternary structure, homotrimer. Mg(2+) serves as cofactor.

Its subcellular location is the cytoplasm. The enzyme catalyses alpha-D-glucosamine 1-phosphate + acetyl-CoA = N-acetyl-alpha-D-glucosamine 1-phosphate + CoA + H(+). It carries out the reaction N-acetyl-alpha-D-glucosamine 1-phosphate + UTP + H(+) = UDP-N-acetyl-alpha-D-glucosamine + diphosphate. The protein operates within nucleotide-sugar biosynthesis; UDP-N-acetyl-alpha-D-glucosamine biosynthesis; N-acetyl-alpha-D-glucosamine 1-phosphate from alpha-D-glucosamine 6-phosphate (route II): step 2/2. Its pathway is nucleotide-sugar biosynthesis; UDP-N-acetyl-alpha-D-glucosamine biosynthesis; UDP-N-acetyl-alpha-D-glucosamine from N-acetyl-alpha-D-glucosamine 1-phosphate: step 1/1. It participates in bacterial outer membrane biogenesis; LPS lipid A biosynthesis. In terms of biological role, catalyzes the last two sequential reactions in the de novo biosynthetic pathway for UDP-N-acetylglucosamine (UDP-GlcNAc). The C-terminal domain catalyzes the transfer of acetyl group from acetyl coenzyme A to glucosamine-1-phosphate (GlcN-1-P) to produce N-acetylglucosamine-1-phosphate (GlcNAc-1-P), which is converted into UDP-GlcNAc by the transfer of uridine 5-monophosphate (from uridine 5-triphosphate), a reaction catalyzed by the N-terminal domain. This is Bifunctional protein GlmU from Streptococcus mutans serotype c (strain ATCC 700610 / UA159).